The following is a 400-amino-acid chain: Tryptophan synthase beta chain (400 aa).

Residue lysine 92 is modified to N6-(pyridoxal phosphate)lysine.

Belongs to the TrpB family. Tetramer of two alpha and two beta chains. The cofactor is pyridoxal 5'-phosphate.

The enzyme catalyses (1S,2R)-1-C-(indol-3-yl)glycerol 3-phosphate + L-serine = D-glyceraldehyde 3-phosphate + L-tryptophan + H2O. It functions in the pathway amino-acid biosynthesis; L-tryptophan biosynthesis; L-tryptophan from chorismate: step 5/5. The beta subunit is responsible for the synthesis of L-tryptophan from indole and L-serine. This chain is Tryptophan synthase beta chain, found in Neisseria meningitidis serogroup A / serotype 4A (strain DSM 15465 / Z2491).